The sequence spans 352 residues: uncharacterized protein (352 aa).

8 consecutive transmembrane segments (helical) span residues 6–26, 30–50, 76–96, 151–171, 197–217, 226–246, 291–311, and 330–350; these read FIFL…IINP, FHIV…IINI, IFLT…FVII, EFII…LPFL, FILV…LPLI, VKVD…IEGL, WLPI…ASFA, and LIGG…AKIF.

This sequence belongs to the CitM (TC 2.A.11) transporter family.

The protein resides in the cell membrane. This is an uncharacterized protein from Methanocaldococcus jannaschii (strain ATCC 43067 / DSM 2661 / JAL-1 / JCM 10045 / NBRC 100440) (Methanococcus jannaschii).